A 117-amino-acid polypeptide reads, in one-letter code: Large ribosomal subunit protein bL19 (117 aa).

It belongs to the bacterial ribosomal protein bL19 family.

Functionally, this protein is located at the 30S-50S ribosomal subunit interface and may play a role in the structure and function of the aminoacyl-tRNA binding site. The protein is Large ribosomal subunit protein bL19 of Desulfosudis oleivorans (strain DSM 6200 / JCM 39069 / Hxd3) (Desulfococcus oleovorans).